We begin with the raw amino-acid sequence, 396 residues long: ATP-dependent RNA helicase eIF4A (396 aa).

Positions 23–51 match the Q motif motif; it reads YEFDDMNLNEKLLRGVFGYGFNKPSAIQQ. The Helicase ATP-binding domain maps to 54–223; sequence IMPIIEGNDV…AKFMQNPVRI (170 aa). Position 67–74 (67–74) interacts with ATP; the sequence is AQSGTGKT. The DEAD box motif lies at 171 to 174; the sequence is DEAD. In terms of domain architecture, Helicase C-terminal spans 234–395; the sequence is GIKQFYVNVE…ELPSDIGTLF (162 aa).

This sequence belongs to the DEAD box helicase family. eIF4A subfamily. In terms of assembly, component of the eIF4F complex, which composition varies with external and internal environmental conditions. It is composed of at least eIF4A, eIF4E and eIF4G.

It is found in the cytoplasm. The enzyme catalyses ATP + H2O = ADP + phosphate + H(+). Functionally, ATP-dependent RNA helicase which is a subunit of the eIF4F complex involved in cap recognition and is required for mRNA binding to ribosome. In the current model of translation initiation, eIF4A unwinds RNA secondary structures in the 5'-UTR of mRNAs which is necessary to allow efficient binding of the small ribosomal subunit, and subsequent scanning for the initiator codon. In Candida glabrata (strain ATCC 2001 / BCRC 20586 / JCM 3761 / NBRC 0622 / NRRL Y-65 / CBS 138) (Yeast), this protein is ATP-dependent RNA helicase eIF4A (TIF1).